The primary structure comprises 214 residues: Calcineurin B homologous protein 3 (214 aa).

A lipid anchor (N-myristoyl glycine) is attached at Gly-2. Residues 110-145 (FRKEKLKFLFHMYDADYDGIITLQEYKNVLDELMSG) enclose the EF-hand domain. Asp-123, Asp-125, Asp-127, and Glu-134 together coordinate Ca(2+).

It belongs to the calcineurin regulatory subunit family. CHP subfamily. In terms of assembly, monomer. Homodimer. Expressed in the bipotential gonad by E4.5 and expressed in both the testis and ovary by E5.5, but with expression higher in the testis. Expressed in the testis cords but also at low levels in the interstitium. In the ovary, expression is principally in the ovarian cortex, but also in the medulla. Also expressed in the embryonic brain, with expression highest in the region between the nasal placode and olfactory bulb. Also expressed in the embryonic heart and tail.

It is found in the nucleus. The protein resides in the cytoplasm. The protein localises to the membrane. It localises to the cell membrane. Its subcellular location is the cell projection. It is found in the lamellipodium. The protein resides in the ruffle membrane. Its function is as follows. Functions as an integral cofactor in cell pH regulation by controlling plasma membrane-type Na(+)/H(+) exchange activity. Promotes the induction of hematopoietic stem cell differentiation toward megakaryocytic lineage. Essential for the coupling of ERK cascade activation with the expression of ETS family genes in megakaryocytic differentiation. Also involved in granulocytic differentiation in a ERK-dependent manner. Inhibits the phosphatase activity of calcineurin. This chain is Calcineurin B homologous protein 3, found in Gallus gallus (Chicken).